A 196-amino-acid chain; its full sequence is Probable thymidylate kinase (196 aa).

Residue 8–15 participates in ATP binding; that stretch reads GIDASGKT.

Belongs to the thymidylate kinase family.

The catalysed reaction is dTMP + ATP = dTDP + ADP. This chain is Probable thymidylate kinase, found in Metallosphaera sedula (strain ATCC 51363 / DSM 5348 / JCM 9185 / NBRC 15509 / TH2).